A 158-amino-acid chain; its full sequence is Snaclec coagulation factor X-activating enzyme light chain 2 (158 aa).

Positions 1 to 23 (MGRSISVSFGLLAVFLSLSGTGA) are cleaved as a signal peptide. Cystine bridges form between C27-C38, C55-C152, and C127-C144. The C-type lectin domain occupies 34-153 (YRYFCYRVFK…CEEPYPFVCK (120 aa)).

It belongs to the snaclec family. Heterotrimer; disulfide-linked. The heterotrimer consists of 1 heavy chain (a metalloproteinase) and 2 light chains: LC1 and LC2. In terms of tissue distribution, expressed by the venom gland.

Its subcellular location is the secreted. Regulatory subunit of the blood coagulation factor X-activating enzyme. Activates coagulation factor X (F10) by cleaving the Arg-Ile bond at position 234, activates coagulation factor IX (F9) by cleaving the Arg-Val bond at position 226 and is also able to activate protein C (PROC). May serve as an exosite by which the enzyme recognizes and binds to the Gla domain of factor X (F10) in a calcium-dependent manner. This Macrovipera lebetinus (Levantine viper) protein is Snaclec coagulation factor X-activating enzyme light chain 2 (LC2).